A 138-amino-acid polypeptide reads, in one-letter code: Lymphocyte antigen 6L (138 aa).

The signal sequence occupies residues 1–16 (MERLVLTLCTLPLAVA). N-linked (GlcNAc...) asparagine glycosylation is present at N27. The UPAR/Ly6 domain occupies 28-122 (LSCYQCFKVS…TPQEGRWALR (95 aa)). 2 disulfides stabilise this stretch: C30/C47 and C103/C108. G117 is lipidated: GPI-anchor amidated glycine. Residues 118–138 (RWALRGGLLLQVGLSLLRALL) constitute a propeptide, removed in mature form.

It is found in the cell membrane. In Homo sapiens (Human), this protein is Lymphocyte antigen 6L.